Consider the following 134-residue polypeptide: Salivary protein 15 Iric-1 (134 aa).

The first 21 residues, Met1–Val21, serve as a signal peptide directing secretion. N-linked (GlcNAc...) asparagine glycosylation is present at Asn22. The segment at Pro48–Asn67 is required for Borrelia OspC-binding. Asn91 and Asn103 each carry an N-linked (GlcNAc...) asparagine glycan. A CD4-binding region spans residues Gly115–Cys134.

The protein belongs to the salp15 family. Monomer. Interacts with host CD4. Interacts with host DC-SIGN (CD209). As to quaternary structure, (Microbial infection) Interacts with Borrelia outer surface protein C (OspC). In terms of tissue distribution, expressed in salivary glands. Detected in fed adult female.

The protein resides in the secreted. Its function is as follows. Salivary tick protein that downregulates host immune system by binding to both dendritic cells, and CD4(+) T cells. Specifically binds to the CD4 coreceptor on T cells. This interaction prevents the activation of the Src kinase, Lck, and its downstream substrate Zap-70, and results in deficient activation of PLCgamma1, the repression of calcium fluxes triggered by T-cell antigen receptor (TCR) ligation, and a subsequent reduction in interleukin-2 production. This salivary protein also binds to DC-SIGN (CD209) on dendritic cells (DC) and activates the Raf-1 kinase/MEK signaling pathway that results in down-regulating expression of pro-inflammatory cytokines. Furthermore, it inhibits T cell proliferation induced by DCs. In addition, it inhibits in vitro keratinocyte inflammation induced by Borrelia burgdorferi or by the major outer surface protein (OspC) of Borrelia. In addition, it downregulates chemokines and monocyte chemoattractant protein 1, as well as several antimicrobial peptides such as defensins, cathelicidin, psoriasin, and RNase 7. Apart from its immunomodulatory activities, it is also associated with protection of Borrelia spirochetes from antibody-mediated killing through its binding to OspC. In vivo, tests on different immune disease animal models show promising therapeutic results, e.g., in inhibiting HIV infection, experimental autoimmune encephalomyelitis, transplantation rejection, and asthma. (Microbial infection) Protects Borrelia garinii (strain VSBP) from host complement-mediated killing by binding to the surface of spirochetes and preventing deposition of host C5b-9 membrane attack complexes. Protects Borrelia garinii (strain A87S) from host complement-mediated killing. In terms of biological role, (Microbial infection) Partially protects Borrelia burgdorferi (strains VS215 and B31) from host complement-mediated killing. In Ixodes ricinus (Common tick), this protein is Salivary protein 15 Iric-1.